Here is a 633-residue protein sequence, read N- to C-terminus: Protein BZZ1 (633 aa).

An F-BAR domain is found at 5–271 (LSIGNEIKDS…VVKQNKPSLN (267 aa)). Residues 138–210 (DMVNKKDNIY…INQANRTKDK (73 aa)) are a coiled coil. Phosphoserine is present on residues Ser327, Ser463, Ser472, and Ser476. A disordered region spans residues 429–495 (VDSKPSSGGS…KKTTQNSSDD (67 aa)). Positions 474 to 493 (NNSIRTTSTNNTKKTTQNSS) are enriched in low complexity. SH3 domains lie at 493–555 (SDDG…ISSA) and 577–633 (LPVR…SYCK).

It belongs to the BZZ1 family. In terms of assembly, interacts with LAS17 and MYO5.

It is found in the cytoplasm. The protein resides in the cytoskeleton. The protein localises to the actin patch. Its function is as follows. Plays a role in endocytosis and trafficking to the vacuole. Functions with type I myosins to restore polarity of the actin cytoskeleton after NaCl stress. The polypeptide is Protein BZZ1 (BZZ1) (Saccharomyces cerevisiae (strain ATCC 204508 / S288c) (Baker's yeast)).